A 318-amino-acid polypeptide reads, in one-letter code: NADH-ubiquinone oxidoreductase chain 1 (318 aa).

The next 8 helical transmembrane spans lie at 2-22, 69-89, 98-118, 140-160, 171-191, 222-242, 253-273, and 285-305; these read FMAN…FLTL, MLYL…WTPL, FNLG…SILW, ISYE…SGSF, HSWL…STLA, LFFM…TTIF, ETYS…FLWI, and LMHL…MWYI.

It belongs to the complex I subunit 1 family. Core subunit of respiratory chain NADH dehydrogenase (Complex I) which is composed of 45 different subunits.

It is found in the mitochondrion inner membrane. It carries out the reaction a ubiquinone + NADH + 5 H(+)(in) = a ubiquinol + NAD(+) + 4 H(+)(out). Its function is as follows. Core subunit of the mitochondrial membrane respiratory chain NADH dehydrogenase (Complex I) which catalyzes electron transfer from NADH through the respiratory chain, using ubiquinone as an electron acceptor. Essential for the catalytic activity and assembly of complex I. This Saguinus leucopus (Silvery-brown bare-face tamarin) protein is NADH-ubiquinone oxidoreductase chain 1 (MT-ND1).